We begin with the raw amino-acid sequence, 159 residues long: SsrA-binding protein (159 aa).

Belongs to the SmpB family.

Its subcellular location is the cytoplasm. Its function is as follows. Required for rescue of stalled ribosomes mediated by trans-translation. Binds to transfer-messenger RNA (tmRNA), required for stable association of tmRNA with ribosomes. tmRNA and SmpB together mimic tRNA shape, replacing the anticodon stem-loop with SmpB. tmRNA is encoded by the ssrA gene; the 2 termini fold to resemble tRNA(Ala) and it encodes a 'tag peptide', a short internal open reading frame. During trans-translation Ala-aminoacylated tmRNA acts like a tRNA, entering the A-site of stalled ribosomes, displacing the stalled mRNA. The ribosome then switches to translate the ORF on the tmRNA; the nascent peptide is terminated with the 'tag peptide' encoded by the tmRNA and targeted for degradation. The ribosome is freed to recommence translation, which seems to be the essential function of trans-translation. This Coxiella burnetii (strain RSA 493 / Nine Mile phase I) protein is SsrA-binding protein.